Reading from the N-terminus, the 275-residue chain is Bis(5'-nucleosyl)-tetraphosphatase, symmetrical (275 aa).

Belongs to the Ap4A hydrolase family.

It catalyses the reaction P(1),P(4)-bis(5'-adenosyl) tetraphosphate + H2O = 2 ADP + 2 H(+). Its function is as follows. Hydrolyzes diadenosine 5',5'''-P1,P4-tetraphosphate to yield ADP. The sequence is that of Bis(5'-nucleosyl)-tetraphosphatase, symmetrical from Hamiltonella defensa subsp. Acyrthosiphon pisum (strain 5AT).